We begin with the raw amino-acid sequence, 282 residues long: Stress response regulator protein 1 (282 aa).

Composition is skewed to low complexity over residues 12 to 30 (NLSR…HSST) and 41 to 58 (SLDT…SNNN). Disordered regions lie at residues 12–31 (NLSR…SSTV), 41–84 (SLDT…DDED), and 112–139 (LTPF…TTVV). Residues 66-77 (SDYNSYTHNQYY) are compositionally biased toward polar residues. The segment covering 125 to 139 (SIISSKSSNKSTTVV) has biased composition (low complexity). A Response regulatory domain is found at 155-273 (SFLIVDDNII…LDFMANSIDD (119 aa)). The residue at position 206 (D206) is a 4-aspartylphosphate.

Required for stress adaptation, morphogenesis and virulence. This chain is Stress response regulator protein 1 (SRR1), found in Candida albicans (strain WO-1) (Yeast).